Consider the following 597-residue polypeptide: uncharacterized protein (597 aa).

Positions 16-78 (VGRLVWVRRR…LENSKTVKAF (63 aa)) constitute a PWWP domain. Disordered stretches follow at residues 126–210 (NLCN…MRGL) and 449–482 (QLKGKRNSRQMSKKQEERRNVYGEEANNNSSTPH). Residues 134-143 (EDSKRCLSGK) are compositionally biased toward basic and acidic residues. Acidic residues predominate over residues 144 to 161 (EDEDSGSSDAEETEDDEL). A compositionally biased stretch (polar residues) spans 166 to 185 (EQLQSSISSQEMNNVGASKV). The span at 450 to 460 (LKGKRNSRQMS) shows a compositional bias: basic residues. Basic and acidic residues predominate over residues 461–470 (KKQEERRNVY).

This is an uncharacterized protein from Arabidopsis thaliana (Mouse-ear cress).